The sequence spans 155 residues: Small ribosomal subunit protein uS7cz/uS7cy (155 aa).

This sequence belongs to the universal ribosomal protein uS7 family. In terms of assembly, part of the 30S ribosomal subunit.

It is found in the plastid. The protein resides in the chloroplast. One of the primary rRNA binding proteins, it binds directly to 16S rRNA where it nucleates assembly of the head domain of the 30S subunit. This chain is Small ribosomal subunit protein uS7cz/uS7cy (rps7-A), found in Angiopteris evecta (Mule's foot fern).